The primary structure comprises 581 residues: Multidrug resistance-like ATP-binding protein MdlA (581 aa).

The region spanning 18-303 (YLGSIILLII…LAWMFNIVER (286 aa)) is the ABC transmembrane type-1 domain. A run of 6 helical transmembrane segments spans residues 23–43 (ILLIIIAFLQLLPPKIIGILI), 53–73 (GFEILPWISIILLIAIIVYIL), 127–149 (VVFAAGEGVLTLVDSSVMGISVL), 153–175 (ITQISWLLTIISLIPMPIMAILI), 247–267 (VIYLSVAFSNLLAITAGGWLV), and 280–300 (FIMYLGLMIWPMLALAWMFNI). In terms of domain architecture, ABC transporter spans 337-571 (INIDMFFYPK…KNWYKSMYDH (235 aa)). An ATP-binding site is contributed by 369–376 (GPTGAGKS).

It belongs to the ABC transporter superfamily. Drug exporter-2 (TC 3.A.1.117) family.

Its subcellular location is the cell membrane. It carries out the reaction ATP + H2O + xenobioticSide 1 = ADP + phosphate + xenobioticSide 2.. In Buchnera aphidicola subsp. Schizaphis graminum (strain Sg), this protein is Multidrug resistance-like ATP-binding protein MdlA (mdlA).